We begin with the raw amino-acid sequence, 671 residues long: DNA ligase (671 aa).

NAD(+) contacts are provided by residues 34–38 (DSEYD), 83–84 (SL), and glutamate 113. Lysine 115 (N6-AMP-lysine intermediate) is an active-site residue. NAD(+) is bound by residues arginine 136, glutamate 170, lysine 286, and lysine 310. Zn(2+)-binding residues include cysteine 404, cysteine 407, cysteine 422, and cysteine 427. The BRCT domain occupies 590 to 671 (EEAGVFAGKT…FTQAVEQSEQ (82 aa)).

The protein belongs to the NAD-dependent DNA ligase family. LigA subfamily. Mg(2+) serves as cofactor. The cofactor is Mn(2+).

The enzyme catalyses NAD(+) + (deoxyribonucleotide)n-3'-hydroxyl + 5'-phospho-(deoxyribonucleotide)m = (deoxyribonucleotide)n+m + AMP + beta-nicotinamide D-nucleotide.. In terms of biological role, DNA ligase that catalyzes the formation of phosphodiester linkages between 5'-phosphoryl and 3'-hydroxyl groups in double-stranded DNA using NAD as a coenzyme and as the energy source for the reaction. It is essential for DNA replication and repair of damaged DNA. The polypeptide is DNA ligase (Shouchella clausii (strain KSM-K16) (Alkalihalobacillus clausii)).